We begin with the raw amino-acid sequence, 141 residues long: Hemoglobin subunit alpha (141 aa).

One can recognise a Globin domain in the interval Val-1–Arg-141. A Phosphoserine modification is found at Ser-3. Position 7 is an N6-succinyllysine (Lys-7). Position 8 is a phosphothreonine (Thr-8). The residue at position 11 (Lys-11) is an N6-succinyllysine. N6-acetyllysine; alternate is present on Lys-16. Lys-16 is modified (N6-succinyllysine; alternate). Tyr-24 is modified (phosphotyrosine). Ser-35 carries the post-translational modification Phosphoserine. Residue Lys-40 is modified to N6-succinyllysine. Ser-49 is subject to Phosphoserine. Residue His-58 coordinates O2. His-87 contributes to the heme b binding site. Ser-102 bears the Phosphoserine mark. The residue at position 108 (Thr-108) is a Phosphothreonine. Ser-124 and Ser-131 each carry phosphoserine. A phosphothreonine mark is found at Thr-134 and Thr-137. Ser-138 bears the Phosphoserine mark.

This sequence belongs to the globin family. As to quaternary structure, heterotetramer of two alpha chains and two beta chains. As to expression, red blood cells.

Involved in oxygen transport from the lung to the various peripheral tissues. This is Hemoglobin subunit alpha from Tamiasciurus hudsonicus (American red squirrel).